The sequence spans 523 residues: Chitinase Chi52 (523 aa).

Residues M1–A30 form the signal peptide. The tract at residues G80 to S101 is disordered. The Fibronectin type-III domain maps to V95–G180. The GH18 domain maps to K190–L513. E302 functions as the Proton donor in the catalytic mechanism.

It belongs to the glycosyl hydrolase 18 family. Chitinase class II subfamily.

It catalyses the reaction Random endo-hydrolysis of N-acetyl-beta-D-glucosaminide (1-&gt;4)-beta-linkages in chitin and chitodextrins.. With respect to regulation, activity is inhibited by Cu(2+) and Co(2+), and almost completely inhibited by SDS. Its function is as follows. Acidic chitinase that displays a broad substrate specificity, showing the highest specific activity toward colloidal chitin, followed by ethylene glycol chitin and ball milled chitin, but exhibits no activity toward powdery chitin and chitosan. Hydrolyzes colloidal chitin and chitooligosaccharides with degree of polymerization 2-5 to release mainly N-acetyl chitobiose. Displays inhibition effects on the growth of some phytopathogenic fungi, including Alternaria alstroemeriae, Botrytis cinerea, Rhizoctonia solani, Sclerotinia sclerotiorum and Valsa mali. The chain is Chitinase Chi52 from Paenibacillus xylanexedens.